Consider the following 571-residue polypeptide: E3 ubiquitin-protein ligase ipaH3 (571 aa).

Residues 1–260 form an interaction with target proteins region; it reads MSIMLPINNN…SQQTAQPDYH (260 aa). LRR repeat units follow at residues 58–81, 83–99, 100–119, 120–144, 146–159, 160–184, 186–202, 205–229, and 232–260; these read INQF…LPPQ, TVLE…PELP, ASLE…PELP, ASLK…LLEY, NADN…PELP, TSLE…SLEA, DVST…PVRN, SEET…ILSL, and TCTI…PDYH. The tract at residues 269–278 is linker; the sequence is SDGQQNTLHR. In terms of domain architecture, NEL spans 279–571; sequence PLADAVTAWF…SENGSQLHHS (293 aa). Positions 279–571 are E3 ubiquitin-protein ligase catalytic domain; sequence PLADAVTAWF…SENGSQLHHS (293 aa). C363 functions as the Glycyl thioester intermediate in the catalytic mechanism.

It belongs to the LRR-containing bacterial E3 ligase family. In terms of processing, ubiquitinated in the presence of host E1 ubiquitin-activating enzyme, E2 ubiquitin-conjugating enzyme UBE2D3 and ubiquitin.

The protein resides in the secreted. It is found in the host cytoplasm. It catalyses the reaction S-ubiquitinyl-[E2 ubiquitin-conjugating enzyme]-L-cysteine + [acceptor protein]-L-lysine = [E2 ubiquitin-conjugating enzyme]-L-cysteine + N(6)-ubiquitinyl-[acceptor protein]-L-lysine.. Functionally, effector proteins function to alter host cell physiology and promote bacterial survival in host tissues. This protein is an E3 ubiquitin ligase that interferes with host's ubiquitination pathway. Synthesizes a 'Lys-48'-linked ubiquitin chain, which requires non-covalent binding between ubiquitin and the host ubiquitin-conjugating enzyme UBE2D1. This chain is E3 ubiquitin-protein ligase ipaH3 (ipaH3), found in Shigella flexneri.